A 317-amino-acid chain; its full sequence is Beta-ketoacyl-[acyl-carrier-protein] synthase III (317 aa).

Catalysis depends on residues C112 and H244. An ACP-binding region spans residues 245–249 (QANLR). N274 is a catalytic residue.

This sequence belongs to the thiolase-like superfamily. FabH family. In terms of assembly, homodimer.

It is found in the cytoplasm. The catalysed reaction is malonyl-[ACP] + acetyl-CoA + H(+) = 3-oxobutanoyl-[ACP] + CO2 + CoA. Its pathway is lipid metabolism; fatty acid biosynthesis. In terms of biological role, catalyzes the condensation reaction of fatty acid synthesis by the addition to an acyl acceptor of two carbons from malonyl-ACP. Catalyzes the first condensation reaction which initiates fatty acid synthesis and may therefore play a role in governing the total rate of fatty acid production. Possesses both acetoacetyl-ACP synthase and acetyl transacylase activities. Its substrate specificity determines the biosynthesis of branched-chain and/or straight-chain of fatty acids. The polypeptide is Beta-ketoacyl-[acyl-carrier-protein] synthase III (Escherichia coli O9:H4 (strain HS)).